A 713-amino-acid polypeptide reads, in one-letter code: MSLFNKIVKEFQWGQHKVRLETGEIARQASGAVIVDIEDTVVLATVVGAKSAKPGQDFFPLTVDYIEKTYSAGKIPGGFFRREGRPSEHETLTSRLIDRPLRPLFPEGFYNEVQVVIHVLSVNPEIPADIPALIGASAALAVSGLPFNGPVGAARVAYVNNEYVLNPTREQIKASRLDLVVAGTERAVLMVESEADQLPEDVMLGAVVFGHEQMQTAIDAIHELVREGGKPEWDWQPAPKDEALNARVTELAQPELLAAYQIRDKQARSTKLKEVYAATSAKLEEEAVAAGTVAADKATVGNILFDLEAKIVRGQILNGEPRIDGRDTRTVRPIEIRTGVLPRTHGSALFTRGETQALVVATLGTKGDEQIIDALEGEYRERFMLHYNMPPFATGETGRVGSPKRREIGHGRLAKRALVACLPSADEFGYSIRVVSEITESNGSSSMASVCGGCLALMDAGVPMKAHVAGIAMGLILEGNKFAVLTDILGDEDHLGDMDFKVAGTADGVTALQMDIKIQGITKEIMQVALAQAKEGRMHILGKMKDAVAGANTQLSEFAPRMITIKINPEKIRDVIGKGGSVIRALTEETGTTIDISDDGVVTIASTNSEGMAEAKKRIENITAEIEVGHVYEGTVLKLLDFGAIVNLLPGKDGLLHISEIVNERVKDINDYLKEGQQVKVKVIQTDEKGRVRLSAKALLNEAAAQADTPPQQ.

Residues aspartate 493 and aspartate 499 each coordinate Mg(2+). In terms of domain architecture, KH spans 560-619; that stretch reads PRMITIKINPEKIRDVIGKGGSVIRALTEETGTTIDISDDGVVTIASTNSEGMAEAKKRI. In terms of domain architecture, S1 motif spans 629–697; it reads GHVYEGTVLK…EKGRVRLSAK (69 aa).

This sequence belongs to the polyribonucleotide nucleotidyltransferase family. Mg(2+) is required as a cofactor.

Its subcellular location is the cytoplasm. It carries out the reaction RNA(n+1) + phosphate = RNA(n) + a ribonucleoside 5'-diphosphate. In terms of biological role, involved in mRNA degradation. Catalyzes the phosphorolysis of single-stranded polyribonucleotides processively in the 3'- to 5'-direction. The protein is Polyribonucleotide nucleotidyltransferase of Burkholderia pseudomallei (strain 1106a).